The sequence spans 373 residues: Glutamine synthetase (373 aa).

At A2 the chain carries N-acetylalanine. Residues A2 to K25 are required for glutamine-induced ubiquitination by CRL4(CRBN) and proteasomal degradation. Residues K11 and K14 each carry the N6-acetyllysine modification. The region spanning E24–R106 is the GS beta-grasp domain. Position 104 is a phosphotyrosine (Y104). A GS catalytic domain is found at L113 to N373. Residue E134 participates in ATP binding. Positions 134, 136, 196, and 203 each coordinate Mn(2+). E203–P208 lines the ATP pocket. N246–W247 serves as a coordination point for L-glutamate. H253 is a binding site for Mn(2+). Residues N255–S257, R319, and R324 each bind ATP. R319 contributes to the L-glutamate binding site. Residue Y336 to E338 participates in ADP binding. E338 contacts Mn(2+). Position 340 (R340) interacts with L-glutamate. The residue at position 343 (S343) is a Phosphoserine.

Belongs to the glutamine synthetase family. In terms of assembly, decamer; composed of two pentamers. Interacts with PALMD. Interacts with RHOJ. Interacts with BEST2; this interaction tethers a fraction of GLUL to the membrane, causing a decrease of cytosolic glutamine synthase (GS) activity and inhibits the chloride channel activity of BEST2 by affecting the gating at the aperture in the absence of intracellular glutamate. Mg(2+) serves as cofactor. It depends on Mn(2+) as a cofactor. Post-translationally, acetylated by EP300/p300; acetylation is stimulated by increased glutamine levels and promotes ubiquitin-mediated proteasomal degradation. Palmitoylated; undergoes autopalmitoylation. In terms of processing, ubiquitinated by ZNRF1. Ubiquitinated by the DCX (DDB1-CUL4-X-box) E3 ubiquitin-protein ligase complex called CRL4(CRBN), leading to proteasomal degradation. In terms of tissue distribution, expressed in microvascular endothelial cells.

The protein resides in the cytoplasm. The protein localises to the cytosol. Its subcellular location is the microsome. It is found in the mitochondrion. It localises to the cell membrane. It catalyses the reaction L-glutamate + NH4(+) + ATP = L-glutamine + ADP + phosphate + H(+). The enzyme catalyses L-cysteinyl-[protein] + hexadecanoyl-CoA = S-hexadecanoyl-L-cysteinyl-[protein] + CoA. Its activity is regulated as follows. Glutamine synthetase activity is inhibited by methionine sulfoximine (MSO). Functionally, glutamine synthetase that catalyzes the ATP-dependent conversion of glutamate and ammonia to glutamine. Its role depends on tissue localization: in the brain, it regulates the levels of toxic ammonia and converts neurotoxic glutamate to harmless glutamine, whereas in the liver, it is one of the enzymes responsible for the removal of ammonia. Plays a key role in ammonium detoxification during erythropoiesis: the glutamine synthetase activity is required to remove ammonium generated by porphobilinogen deaminase (HMBS) during heme biosynthesis to prevent ammonium accumulation and oxidative stress. Essential for proliferation of fetal skin fibroblasts. Independently of its glutamine synthetase activity, required for endothelial cell migration during vascular development. Involved in angiogenesis by regulating membrane localization and activation of the GTPase RHOJ, possibly by promoting RHOJ palmitoylation. May act as a palmitoyltransferase for RHOJ: able to autopalmitoylate and then transfer the palmitoyl group to RHOJ. Plays a role in ribosomal 40S subunit biogenesis. Through the interaction with BEST2, inhibits BEST2 channel activity by affecting the gating at the aperture in the absence of intracellular L-glutamate, but sensitizes BEST2 to intracellular L-glutamate, which promotes the opening of BEST2 and thus relieves its inhibitory effect on BEST2. The chain is Glutamine synthetase from Mus musculus (Mouse).